Reading from the N-terminus, the 353-residue chain is ASPTSPKVFPLSLCSTQPDGDVVVACLVQGFFPQEPLSVTWSESGQGVTARNFPPSQDASGDLYTTSSQLTLPATQCPDGKSVTCHVNHYTNPSQDVTVPCRVPSTPPTPSPSTPPTPSPPCCHPRLSLHRPALEDLLLGSEANLTCTLTGLRDASGVTFTWTPSSGKSAVEGPPERDLCGCYSVSSVLPGCAEPWNHGKTFTCTAAYPESKTPLTATLSKSGNMFRPEVHLLPPPSEELALNELVTLTCLARGFSPKDVLVRWLQGSQELPREKYLTWASRQEPSQGTTTFAVTSILRVAAEDWKKGDTFSCMVGHEALPLAFTQKTIDRLAGKPTHVNVSVVMAEVDGTCY.

The Ig-like 1 domain maps to 6–98 (PKVFPLSLCS…HYTNPSQDVT (93 aa)). 2 cysteine pairs are disulfide-bonded: cysteine 26–cysteine 85 and cysteine 77–cysteine 101. Positions 96–121 (DVTVPCRVPSTPPTPSPSTPPTPSPP) are disordered. The span at 105-121 (STPPTPSPSTPPTPSPP) shows a compositional bias: pro residues. 3 disulfide bridges follow: cysteine 123-cysteine 180, cysteine 147-cysteine 204, and cysteine 250-cysteine 313. Ig-like domains lie at 125–220 (PRLS…ATLS) and 228–330 (PEVH…KTID). Asparagine 144 carries an N-linked (GlcNAc...) asparagine glycan. The N-linked (GlcNAc...) asparagine glycan is linked to asparagine 340. Cysteine 352 lines the 3-hydroxy-L-kynurenine pocket.

As to quaternary structure, monomeric or polymeric. Post-translationally, 3-Hydroxykynurenine, an oxidized tryptophan metabolite that is common in biological fluids, reacts with alpha-1-microglobulin to form heterogeneous polycyclic chromophores including hydroxanthommatin. The chromophore reacts with accessible cysteines forming non-reducible thioether cross-links with Ig alpha-1 chain C region Cys-352.

In terms of biological role, ig alpha is the major immunoglobulin class in body secretions. It may serve both to defend against local infection and to prevent access of foreign antigens to the general immunologic system. The sequence is that of Ig alpha-1 chain C region (IGHA1) from Gorilla gorilla gorilla (Western lowland gorilla).